A 98-amino-acid polypeptide reads, in one-letter code: Feather keratin 4 (98 aa).

The residue at position 2 (S2) is an N-acetylserine.

It belongs to the avian keratin family. The avian keratins (F-ker, S-ker, C-ker and B-ker) are a complex mixture of very similar polypeptides.

The chain is Feather keratin 4 from Gallus gallus (Chicken).